A 415-amino-acid polypeptide reads, in one-letter code: Esterase FrsA (415 aa).

The protein belongs to the FrsA family.

It catalyses the reaction a carboxylic ester + H2O = an alcohol + a carboxylate + H(+). Functionally, catalyzes the hydrolysis of esters. The polypeptide is Esterase FrsA (Yersinia pseudotuberculosis serotype O:1b (strain IP 31758)).